A 401-amino-acid polypeptide reads, in one-letter code: Bifunctional sugar-1-phosphate nucleotidylyltransferase/acetyltransferase (401 aa).

The tract at residues 1–220 (MKAFILAAGS…KPWNIIDVNK (220 aa)) is nucleotidylyltransferase. Residues 8–13 (AGSGER), glutamine 73, and glycine 79 each bind a ribonucleoside 5'-triphosphate. Positions 80, 97, 131, 146, and 157 each coordinate N-acetyl-alpha-D-glucosamine 1-phosphate. The interval 236 to 401 (EDNVKIKGKV…DVGYGEFFKV (166 aa)) is acetyltransferase.

It in the N-terminal section; belongs to the N-acetylglucosamine-1-phosphate uridyltransferase family. The protein in the C-terminal section; belongs to the transferase hexapeptide repeat family. In terms of assembly, homotrimer. Co(2+) serves as cofactor. It depends on Mn(2+) as a cofactor.

The catalysed reaction is dTTP + alpha-D-glucose 1-phosphate + H(+) = dTDP-alpha-D-glucose + diphosphate. The enzyme catalyses alpha-D-glucose 1-phosphate + UTP + H(+) = UDP-alpha-D-glucose + diphosphate. It catalyses the reaction N-acetyl-alpha-D-galactosamine 1-phosphate + UTP + H(+) = UDP-N-acetyl-alpha-D-galactosamine + diphosphate. It carries out the reaction N-acetyl-alpha-D-glucosamine 1-phosphate + UTP + H(+) = UDP-N-acetyl-alpha-D-glucosamine + diphosphate. The catalysed reaction is alpha-D-galactosamine 1-phosphate + acetyl-CoA = N-acetyl-alpha-D-galactosamine 1-phosphate + CoA + H(+). The enzyme catalyses alpha-D-glucosamine 1-phosphate + acetyl-CoA = N-acetyl-alpha-D-glucosamine 1-phosphate + CoA + H(+). The protein operates within nucleotide-sugar biosynthesis; UDP-N-acetyl-alpha-D-glucosamine biosynthesis; N-acetyl-alpha-D-glucosamine 1-phosphate from alpha-D-glucosamine 6-phosphate (route II): step 2/2. It functions in the pathway nucleotide-sugar biosynthesis; UDP-N-acetyl-alpha-D-glucosamine biosynthesis; UDP-N-acetyl-alpha-D-glucosamine from N-acetyl-alpha-D-glucosamine 1-phosphate: step 1/1. Its activity is regulated as follows. GlcN-1-P acetyltransferase activity is inhibited by divalent cations. GalN-1-P acetyltransferase activity is enhanced by Co(2+), Mg(2+) and Ca(2+), but inhibited by Zn(2+) or Mn(2+). Bifunctional enzyme involved in the synthesis of UDP-N-acetylglucosamine (UDP-GlcNAc) and UDP-N-acetylgalactosamine (UDP-GalNAc). It has multiple amino-sugar-1-phosphate acetyltransferase activities, including glucosamine-1-phosphate (GlcN-1-P) acetyltransferase and galactosamine-1-phosphate (GalN-1-P) acetyltransferase activities, and multiple sugar-1-phosphate nucleotidylyltransferase activities, including N-acetylglucosamine-1-phosphate (GlcNAc-1-P) uridyltransferase and N-acetylgalactosamine-1-phosphate (GalNAc-1-P) uridyltransferase activities. Also catalyzes the formation of dTDP-glucose from dTTP and glucose-1-phosphate (Glc-1-P), and the reverse reaction, which produces dTTP from dTDP-glucose and diphosphate. Can also catalyze the formation of UDP-glucose from UTP and glucose-1-phosphate. This Sulfurisphaera tokodaii (strain DSM 16993 / JCM 10545 / NBRC 100140 / 7) (Sulfolobus tokodaii) protein is Bifunctional sugar-1-phosphate nucleotidylyltransferase/acetyltransferase.